The chain runs to 183 residues: Inner membrane-spanning protein YciB (183 aa).

Transmembrane regions (helical) follow at residues 22-44 (IYTA…WVRY), 54-74 (TFLL…DAFI), 76-96 (WKVT…RYGF), 119-139 (VNLA…YVAF), and 149-169 (FKVF…GVYL).

The protein belongs to the YciB family.

It is found in the cell inner membrane. Functionally, plays a role in cell envelope biogenesis, maintenance of cell envelope integrity and membrane homeostasis. The protein is Inner membrane-spanning protein YciB of Aeromonas salmonicida (strain A449).